Reading from the N-terminus, the 298-residue chain is S-adenosyl-L-methionine-dependent methyltransferase dpfgK (298 aa).

This sequence belongs to the methyltransferase superfamily.

Its pathway is secondary metabolite biosynthesis; terpenoid biosynthesis. In terms of biological role, S-adenosyl-L-methionine-dependent methyltransferase; part of the gene cluster that mediates the biosynthesis of diterpenoid pyrones. The first step of the pathway is the synthesis of the alpha-pyrone moiety by the polyketide synthase dpfgA via condensation of one acetyl-CoA starter unit with 3 malonyl-CoA units and 2 methylations. The alpha-pyrone is then combined with geranylgeranyl pyrophosphate (GGPP) formed by the GGPP synthase dpfgD through the action of the prenyltransferase dpfgC to yield a linear alpha-pyrone diterpenoid. Subsequent steps in the diterpenoid pyrone biosynthetic pathway involve the decalin core formation, which is initiated by the epoxidation of the C10-C11 olefin by the FAD-dependent oxidoreductase dpfgE, and is followed by a cyclization cascade catalyzed by the terpene cyclase dpfgB. The short chain dehydrogenase/reductase dpfgG then oxidizes the 8S hydroxy group to a ketone and the short chain dehydrogenase/reductase dpfgH reduces the ketone to the 8R hydroxy group to yield higginsianin B. Higginsianin B is further methylated by the methyltransferase dpfgI to produce the intermediate named FDDP B. The cytochrome P450 monooxygenase dfgpJ then catalyzes a three-step oxidation at C-27 to generate a carboxylic acid as well as C-26 hydroxylation. Finally, methyltransferase dpfgK methylates the carboxylic acid generated by dpfgJ, yielding the final diterpenoid pyrones from the pathway which were named FDDP D and FDDP E. This chain is S-adenosyl-L-methionine-dependent methyltransferase dpfgK, found in Gibberella zeae (strain ATCC MYA-4620 / CBS 123657 / FGSC 9075 / NRRL 31084 / PH-1) (Wheat head blight fungus).